Reading from the N-terminus, the 155-residue chain is DNA gyrase inhibitor (155 aa).

This sequence belongs to the DNA gyrase inhibitor family. Interacts with DNA gyrase.

Its subcellular location is the cytoplasm. In terms of biological role, inhibits the supercoiling activity of DNA gyrase. Acts by inhibiting DNA gyrase at an early step, prior to (or at the step of) binding of DNA by the gyrase. It protects cells against toxins that target DNA gyrase, by inhibiting activity of these toxins and reducing the formation of lethal double-strand breaks in the cell. This is DNA gyrase inhibitor from Salmonella typhi.